Reading from the N-terminus, the 234-residue chain is MSLLYEGKAKRVFTTNIDGQLRVEYKDEVTAGNGAKKDTMIGKGKLNNQITSIIFDYLTHNHIDNHFIKQLSQTEQLVQQVDIIPLEVVVRNIATGSITKRLGFKKGHTFEEPLVEFFYKKDELNDPLITDDHVKLLGIANDEEIKQLKQMAKDINQVLIQLMNEMSLRLVDFKVEFGKTNGGKILLADEISPDTCRIWDKNTDTNFDKDVYRNNTGSLIETYQTFLNKLEDLK.

The protein belongs to the SAICAR synthetase family.

It carries out the reaction 5-amino-1-(5-phospho-D-ribosyl)imidazole-4-carboxylate + L-aspartate + ATP = (2S)-2-[5-amino-1-(5-phospho-beta-D-ribosyl)imidazole-4-carboxamido]succinate + ADP + phosphate + 2 H(+). It functions in the pathway purine metabolism; IMP biosynthesis via de novo pathway; 5-amino-1-(5-phospho-D-ribosyl)imidazole-4-carboxamide from 5-amino-1-(5-phospho-D-ribosyl)imidazole-4-carboxylate: step 1/2. This chain is Phosphoribosylaminoimidazole-succinocarboxamide synthase, found in Staphylococcus epidermidis (strain ATCC 35984 / DSM 28319 / BCRC 17069 / CCUG 31568 / BM 3577 / RP62A).